The following is an 83-amino-acid chain: Cytochrome b559 subunit alpha (83 aa).

Residues 21-35 (VIHSITIPSLFIAGW) traverse the membrane as a helical segment. Residue His-23 participates in heme binding.

The protein belongs to the PsbE/PsbF family. Heterodimer of an alpha subunit and a beta subunit. PSII is composed of 1 copy each of membrane proteins PsbA, PsbB, PsbC, PsbD, PsbE, PsbF, PsbH, PsbI, PsbJ, PsbK, PsbL, PsbM, PsbT, PsbX, PsbY, PsbZ, Psb30/Ycf12, at least 3 peripheral proteins of the oxygen-evolving complex and a large number of cofactors. It forms dimeric complexes. Heme b is required as a cofactor.

The protein localises to the plastid. It localises to the chloroplast thylakoid membrane. Its function is as follows. This b-type cytochrome is tightly associated with the reaction center of photosystem II (PSII). PSII is a light-driven water:plastoquinone oxidoreductase that uses light energy to abstract electrons from H(2)O, generating O(2) and a proton gradient subsequently used for ATP formation. It consists of a core antenna complex that captures photons, and an electron transfer chain that converts photonic excitation into a charge separation. This Agrostis stolonifera (Creeping bentgrass) protein is Cytochrome b559 subunit alpha.